Here is a 158-residue protein sequence, read N- to C-terminus: MENPRSASLQKSWKFVRESLLLCLIAGRGEAQCDGCIEYCCDGVPPFCCSYYAYVGDVLSGTAISGIVFGVVFLMGAVAAVFLCVCMCVKNSRGSRVGVFSSTYINTVTQGYPGPPPPPYSYDHEMFPPDLRPPPYTPTVPRSANYSPPPPYPGFSRK.

The signal sequence occupies residues 1-31; it reads MENPRSASLQKSWKFVRESLLLCLIAGRGEA. Over 32–62 the chain is Extracellular; the sequence is QCDGCIEYCCDGVPPFCCSYYAYVGDVLSGT. The chain crosses the membrane as a helical span at residues 63–83; sequence AISGIVFGVVFLMGAVAAVFL. The Cytoplasmic segment spans residues 84-158; it reads CVCMCVKNSR…PPPYPGFSRK (75 aa). Residues 119 to 158 form a disordered region; sequence PYSYDHEMFPPDLRPPPYTPTVPRSANYSPPPPYPGFSRK. Residues 147–158 show a composition bias toward pro residues; the sequence is SPPPPYPGFSRK.

It belongs to the CYYR1 family.

The protein localises to the membrane. This Danio rerio (Zebrafish) protein is Cysteine and tyrosine-rich protein 1 (cyyr1).